We begin with the raw amino-acid sequence, 66 residues long: Regulator of G-protein signaling 11 (66 aa).

The 66-residue stretch at glutamate 1–leucine 66 folds into the RGS domain.

As to quaternary structure, heterodimer with Gbeta5. Interacts with RGS7BP, leading to regulate the subcellular location of the heterodimer formed with Gbeta5.

Inhibits signal transduction by increasing the GTPase activity of G protein alpha subunits thereby driving them into their inactive GDP-bound form. This chain is Regulator of G-protein signaling 11 (Rgs11), found in Rattus norvegicus (Rat).